We begin with the raw amino-acid sequence, 321 residues long: uncharacterized protein (321 aa).

Positions 1–18 (MKKMKKLLLLLSASFAFS) are cleaved as a signal peptide.

This is an uncharacterized protein from Aquifex aeolicus (strain VF5).